A 357-amino-acid chain; its full sequence is Isopentenyl-diphosphate delta-isomerase (357 aa).

13-14 is a binding site for substrate; sequence RK. Residues S71, 72–74, S102, and N131 contribute to the FMN site; that span reads SMT. 102 to 104 provides a ligand contact to substrate; that stretch reads SMR. Residue Q166 participates in substrate binding. Residue E167 coordinates Mg(2+). Residues K198 and 311–312 each bind FMN; that span reads AR.

This sequence belongs to the IPP isomerase type 2 family. In terms of assembly, homooctamer. Dimer of tetramers. It depends on FMN as a cofactor. NADPH serves as cofactor. The cofactor is Mg(2+).

It is found in the cytoplasm. The enzyme catalyses isopentenyl diphosphate = dimethylallyl diphosphate. In terms of biological role, involved in the biosynthesis of isoprenoids. Catalyzes the 1,3-allylic rearrangement of the homoallylic substrate isopentenyl (IPP) to its allylic isomer, dimethylallyl diphosphate (DMAPP). This is Isopentenyl-diphosphate delta-isomerase from Chlorobium chlorochromatii (strain CaD3).